The chain runs to 58 residues: Large ribosomal subunit protein bL32c (58 aa).

Residues M1 to K23 are disordered.

This sequence belongs to the bacterial ribosomal protein bL32 family.

Its subcellular location is the plastid. The protein resides in the chloroplast. The chain is Large ribosomal subunit protein bL32c (rpl32-A) from Trieres chinensis (Marine centric diatom).